The following is a 618-amino-acid chain: 1-deoxy-D-xylulose-5-phosphate synthase (618 aa).

Thiamine diphosphate contacts are provided by residues His77 and Gly118 to Ser120. Asp149 is a binding site for Mg(2+). Thiamine diphosphate-binding positions include Gly150 to Ala151, Asn178, Tyr285, and Glu367. Asn178 serves as a coordination point for Mg(2+).

The protein belongs to the transketolase family. DXPS subfamily. Homodimer. It depends on Mg(2+) as a cofactor. Requires thiamine diphosphate as cofactor.

It carries out the reaction D-glyceraldehyde 3-phosphate + pyruvate + H(+) = 1-deoxy-D-xylulose 5-phosphate + CO2. It participates in metabolic intermediate biosynthesis; 1-deoxy-D-xylulose 5-phosphate biosynthesis; 1-deoxy-D-xylulose 5-phosphate from D-glyceraldehyde 3-phosphate and pyruvate: step 1/1. Functionally, catalyzes the acyloin condensation reaction between C atoms 2 and 3 of pyruvate and glyceraldehyde 3-phosphate to yield 1-deoxy-D-xylulose-5-phosphate (DXP). The chain is 1-deoxy-D-xylulose-5-phosphate synthase from Idiomarina loihiensis (strain ATCC BAA-735 / DSM 15497 / L2-TR).